We begin with the raw amino-acid sequence, 134 residues long: uncharacterized protein (134 aa).

This is an uncharacterized protein from Swinepox virus (strain Kasza) (SWPV).